The following is a 345-amino-acid chain: Phosphoribosylformylglycinamidine cyclo-ligase (345 aa).

It belongs to the AIR synthase family.

Its subcellular location is the cytoplasm. It carries out the reaction 2-formamido-N(1)-(5-O-phospho-beta-D-ribosyl)acetamidine + ATP = 5-amino-1-(5-phospho-beta-D-ribosyl)imidazole + ADP + phosphate + H(+). It functions in the pathway purine metabolism; IMP biosynthesis via de novo pathway; 5-amino-1-(5-phospho-D-ribosyl)imidazole from N(2)-formyl-N(1)-(5-phospho-D-ribosyl)glycinamide: step 2/2. The sequence is that of Phosphoribosylformylglycinamidine cyclo-ligase from Tolumonas auensis (strain DSM 9187 / NBRC 110442 / TA 4).